The primary structure comprises 567 residues: Dihydroxy-acid dehydratase (567 aa).

A [2Fe-2S] cluster-binding site is contributed by Cys-52. Asp-84 is a Mg(2+) binding site. [2Fe-2S] cluster is bound at residue Cys-125. Positions 126 and 127 each coordinate Mg(2+). Position 127 is an N6-carboxylysine (Lys-127). Residue Cys-197 participates in [2Fe-2S] cluster binding. Glu-448 serves as a coordination point for Mg(2+). Ser-474 acts as the Proton acceptor in catalysis.

Belongs to the IlvD/Edd family. Homodimer. [2Fe-2S] cluster is required as a cofactor. Mg(2+) serves as cofactor.

The enzyme catalyses (2R)-2,3-dihydroxy-3-methylbutanoate = 3-methyl-2-oxobutanoate + H2O. It carries out the reaction (2R,3R)-2,3-dihydroxy-3-methylpentanoate = (S)-3-methyl-2-oxopentanoate + H2O. The protein operates within amino-acid biosynthesis; L-isoleucine biosynthesis; L-isoleucine from 2-oxobutanoate: step 3/4. Its pathway is amino-acid biosynthesis; L-valine biosynthesis; L-valine from pyruvate: step 3/4. Functionally, functions in the biosynthesis of branched-chain amino acids. Catalyzes the dehydration of (2R,3R)-2,3-dihydroxy-3-methylpentanoate (2,3-dihydroxy-3-methylvalerate) into 2-oxo-3-methylpentanoate (2-oxo-3-methylvalerate) and of (2R)-2,3-dihydroxy-3-methylbutanoate (2,3-dihydroxyisovalerate) into 2-oxo-3-methylbutanoate (2-oxoisovalerate), the penultimate precursor to L-isoleucine and L-valine, respectively. The polypeptide is Dihydroxy-acid dehydratase (Streptococcus pneumoniae (strain CGSP14)).